Reading from the N-terminus, the 272-residue chain is Phosphate import ATP-binding protein PstB 1 (272 aa).

In terms of domain architecture, ABC transporter spans 26–267; that stretch reads LEIRNLDLRY…PKKRKTEDYI (242 aa). 58-65 provides a ligand contact to ATP; the sequence is GPSGCGKS.

This sequence belongs to the ABC transporter superfamily. Phosphate importer (TC 3.A.1.7) family. As to quaternary structure, the complex is composed of two ATP-binding proteins (PstB), two transmembrane proteins (PstC and PstA) and a solute-binding protein (PstS).

The protein resides in the cell inner membrane. It carries out the reaction phosphate(out) + ATP + H2O = ADP + 2 phosphate(in) + H(+). Functionally, part of the ABC transporter complex PstSACB involved in phosphate import. Responsible for energy coupling to the transport system. In Shewanella oneidensis (strain ATCC 700550 / JCM 31522 / CIP 106686 / LMG 19005 / NCIMB 14063 / MR-1), this protein is Phosphate import ATP-binding protein PstB 1.